Consider the following 504-residue polypeptide: Probable alpha-L-arabinofuranosidase C (504 aa).

N-linked (GlcNAc...) asparagine glycans are attached at residues asparagine 152, asparagine 181, and asparagine 269.

This sequence belongs to the glycosyl hydrolase 51 family.

It is found in the secreted. It catalyses the reaction Hydrolysis of terminal non-reducing alpha-L-arabinofuranoside residues in alpha-L-arabinosides.. It functions in the pathway glycan metabolism; L-arabinan degradation. Its function is as follows. Alpha-L-arabinofuranosidase involved in the degradation of arabinoxylan, a major component of plant hemicellulose. Acts only on small linear 1,5-alpha-linked L-arabinofuranosyl oligosaccharides. In Aspergillus flavus (strain ATCC 200026 / FGSC A1120 / IAM 13836 / NRRL 3357 / JCM 12722 / SRRC 167), this protein is Probable alpha-L-arabinofuranosidase C (abfC).